Here is a 311-residue protein sequence, read N- to C-terminus: Malate dehydrogenase (311 aa).

NAD(+)-binding positions include G7–G13 and D34. Residues R81 and R87 each contribute to the substrate site. Residues N94 and I117–N119 each bind NAD(+). Substrate-binding residues include N119 and R153. Catalysis depends on H177, which acts as the Proton acceptor. M227 provides a ligand contact to NAD(+).

Belongs to the LDH/MDH superfamily. MDH type 1 family. As to quaternary structure, homodimer.

It catalyses the reaction (S)-malate + NAD(+) = oxaloacetate + NADH + H(+). In terms of biological role, catalyzes the reversible oxidation of malate to oxaloacetate. This chain is Malate dehydrogenase, found in Shewanella halifaxensis (strain HAW-EB4).